The chain runs to 339 residues: Fructose-1,6-bisphosphatase class 1 (339 aa).

Mg(2+) contacts are provided by glutamate 94, aspartate 116, leucine 118, and aspartate 119. Substrate-binding positions include 119-122 (DGSS), asparagine 210, and lysine 276. Position 282 (glutamate 282) interacts with Mg(2+).

It belongs to the FBPase class 1 family. As to quaternary structure, homotetramer. The cofactor is Mg(2+).

The protein resides in the cytoplasm. The enzyme catalyses beta-D-fructose 1,6-bisphosphate + H2O = beta-D-fructose 6-phosphate + phosphate. It functions in the pathway carbohydrate biosynthesis; gluconeogenesis. This Burkholderia ambifaria (strain ATCC BAA-244 / DSM 16087 / CCUG 44356 / LMG 19182 / AMMD) (Burkholderia cepacia (strain AMMD)) protein is Fructose-1,6-bisphosphatase class 1.